A 348-amino-acid chain; its full sequence is Neuronal growth regulator 1 (348 aa).

The signal sequence occupies residues 1-31; the sequence is MVLLAQGACCSNQWLAAVLLSLCSCLPAGQS. Ig-like C2-type domains follow at residues 32–128, 133–215, and 219–307; these read VDFP…VHLT, PKIY…RVIV, and PTIQ…LPLN. Cysteines 54 and 112 form a disulfide. N-linked (GlcNAc...) asparagine glycosylation is found at Asn67 and Asn149. 2 cysteine pairs are disulfide-bonded: Cys154–Cys197 and Cys239–Cys291. Tyr181 carries the phosphotyrosine modification. Asn269, Asn280, Asn288, and Asn301 each carry an N-linked (GlcNAc...) asparagine glycan. Residue Gly318 is the site of GPI-anchor amidated glycine attachment. Positions 319 to 348 are cleaved as a propeptide — removed in mature form; that stretch reads SACDLFSCWSLALTLSSVISIFYLKNAILQ.

Belongs to the immunoglobulin superfamily. IgLON family. In terms of tissue distribution, expressed in brain.

It is found in the cell membrane. Functionally, may be involved in cell-adhesion. May function as a trans-neural growth-promoting factor in regenerative axon sprouting in the mammalian brain. This is Neuronal growth regulator 1 (Negr1) from Mus musculus (Mouse).